A 107-amino-acid polypeptide reads, in one-letter code: Iron-binding protein IscA (107 aa).

Positions 35, 99, and 101 each coordinate Fe cation.

Belongs to the HesB/IscA family. Homodimer; may form tetramers and higher multimers. Fe cation serves as cofactor.

Is able to transfer iron-sulfur clusters to apo-ferredoxin. Multiple cycles of [2Fe2S] cluster formation and transfer are observed, suggesting that IscA acts catalytically. Recruits intracellular free iron so as to provide iron for the assembly of transient iron-sulfur cluster in IscU in the presence of IscS, L-cysteine and the thioredoxin reductase system TrxA/TrxB. The chain is Iron-binding protein IscA from Pectobacterium atrosepticum (strain SCRI 1043 / ATCC BAA-672) (Erwinia carotovora subsp. atroseptica).